We begin with the raw amino-acid sequence, 277 residues long: Large ribosomal subunit protein uL2 (277 aa).

Disordered stretches follow at residues Lys32–Gly58 and Val225–Lys277. Positions Tyr258–Lys277 are enriched in basic residues.

Belongs to the universal ribosomal protein uL2 family. As to quaternary structure, part of the 50S ribosomal subunit. Forms a bridge to the 30S subunit in the 70S ribosome.

In terms of biological role, one of the primary rRNA binding proteins. Required for association of the 30S and 50S subunits to form the 70S ribosome, for tRNA binding and peptide bond formation. It has been suggested to have peptidyltransferase activity; this is somewhat controversial. Makes several contacts with the 16S rRNA in the 70S ribosome. This chain is Large ribosomal subunit protein uL2, found in Borreliella burgdorferi (strain ATCC 35210 / DSM 4680 / CIP 102532 / B31) (Borrelia burgdorferi).